Reading from the N-terminus, the 222-residue chain is Glutathione S-transferase alpha-4 (222 aa).

Met1 carries the N-acetylmethionine modification. One can recognise a GST N-terminal domain in the interval 3 to 83 (VKPKLYYFQG…YLAAKYNLYG (81 aa)). Glutathione-binding positions include Tyr9, 54–55 (QV), and 67–68 (QT). Positions 85–208 (DLKERVRIDM…QPGSQRKPPP (124 aa)) constitute a GST C-terminal domain.

Belongs to the GST superfamily. Alpha family. As to quaternary structure, homodimer.

Its subcellular location is the cytoplasm. The enzyme catalyses RX + glutathione = an S-substituted glutathione + a halide anion + H(+). Its function is as follows. Conjugation of reduced glutathione to a wide number of exogenous and endogenous hydrophobic electrophiles. The protein is Glutathione S-transferase alpha-4 (Gsta4) of Rattus norvegicus (Rat).